Reading from the N-terminus, the 240-residue chain is Putative exosome complex component RRP41 (240 aa).

This sequence belongs to the RNase PH family. Component of the RNA exosome complex.

The protein localises to the cytoplasm. It is found in the nucleus. Its subcellular location is the nucleolus. It localises to the nucleoplasm. Non-catalytic component of the RNA exosome complex which has 3'-&gt;5' exoribonuclease activity and participates in a multitude of cellular RNA processing and degradation events. The sequence is that of Putative exosome complex component RRP41 (exos-4.1) from Caenorhabditis briggsae.